The sequence spans 29 residues: Cytochrome b6-f complex subunit 8 (29 aa).

The helical transmembrane segment at 3-23 threads the bilayer; sequence ITSIAWGALMVVFTFSLSLVV.

This sequence belongs to the PetN family. As to quaternary structure, the 4 large subunits of the cytochrome b6-f complex are cytochrome b6, subunit IV (17 kDa polypeptide, PetD), cytochrome f and the Rieske protein, while the 4 small subunits are PetG, PetL, PetM and PetN. The complex functions as a dimer.

Its subcellular location is the plastid membrane. Component of the cytochrome b6-f complex, which mediates electron transfer between photosystem II (PSII) and photosystem I (PSI), cyclic electron flow around PSI, and state transitions. The chain is Cytochrome b6-f complex subunit 8 from Aneura mirabilis (Parasitic liverwort).